A 273-amino-acid polypeptide reads, in one-letter code: Ribosomal RNA small subunit methyltransferase A (273 aa).

S-adenosyl-L-methionine-binding residues include Asn17, Leu19, Gly44, Glu65, and Asn111.

This sequence belongs to the class I-like SAM-binding methyltransferase superfamily. rRNA adenine N(6)-methyltransferase family. RsmA subfamily.

It is found in the cytoplasm. The catalysed reaction is adenosine(1518)/adenosine(1519) in 16S rRNA + 4 S-adenosyl-L-methionine = N(6)-dimethyladenosine(1518)/N(6)-dimethyladenosine(1519) in 16S rRNA + 4 S-adenosyl-L-homocysteine + 4 H(+). In terms of biological role, specifically dimethylates two adjacent adenosines (A1518 and A1519) in the loop of a conserved hairpin near the 3'-end of 16S rRNA in the 30S particle. May play a critical role in biogenesis of 30S subunits. This chain is Ribosomal RNA small subunit methyltransferase A, found in Buchnera aphidicola subsp. Acyrthosiphon pisum (strain APS) (Acyrthosiphon pisum symbiotic bacterium).